The chain runs to 426 residues: MNKTTFENVYYWEGKAQIPQEGQFIKLKEDKTLEVPDNPIIPFIEGDGIGPEITQAMLLIINTAVEKTYNGSKKIYWVELLAGDKAEEKTGERLPQETLDVLKESIVGIKGPLGTPVGKGVRSINSALRRAFDYYSAVRPVYWMGQATPIPNPERVDLVVFRENTDDVYAGVEFFAGTPEAKKVREFLIKEMGAKEEGFPEDVGITVKPMSEFKTKRHVRKALRYALENNKKNVAVIGKGNIMKATEGAFINWAFEVAEEPEFKGKVVTDPEAEPGEGQVKLTKVITDQMLMQLVLKPEAWDVIIAQNLNGDYVSDLAASLIGGPGFVPSGNIGDGYALFESTHGTAWDIAGKGIANPLSLTLSGAMMLEYIGWKEAAQKVYDAVRRTLAEHIGTPDIASGFQKQGIEAKAVGTMEFAEEISKRIE.

Ser-123, Asn-125, Arg-129, Arg-139, and Arg-162 together coordinate D-threo-isocitrate. Residue Asp-312 participates in Mg(2+) binding. NADP(+) is bound by residues 344 to 350 (HGTAWDI), Asn-357, and Lys-404.

This sequence belongs to the isocitrate and isopropylmalate dehydrogenases family. Homodimer. Mg(2+) is required as a cofactor. It depends on Mn(2+) as a cofactor.

The enzyme catalyses D-threo-isocitrate + NADP(+) = 2-oxoglutarate + CO2 + NADPH. Its function is as follows. Catalyzes the oxidative decarboxylation of isocitrate to 2-oxoglutarate and carbon dioxide with the concomitant reduction of NADP(+). This chain is Isocitrate dehydrogenase [NADP] (icd), found in Aquifex aeolicus (strain VF5).